The primary structure comprises 361 residues: Phosphoserine aminotransferase (361 aa).

Position 43 (Arg-43) interacts with L-glutamate. Pyridoxal 5'-phosphate is bound by residues 77-78 (AS), Trp-103, Thr-153, Asp-173, and Gln-196. N6-(pyridoxal phosphate)lysine is present on Lys-197. 238 to 239 (NT) serves as a coordination point for pyridoxal 5'-phosphate.

The protein belongs to the class-V pyridoxal-phosphate-dependent aminotransferase family. SerC subfamily. As to quaternary structure, homodimer. Pyridoxal 5'-phosphate serves as cofactor.

Its subcellular location is the cytoplasm. The enzyme catalyses O-phospho-L-serine + 2-oxoglutarate = 3-phosphooxypyruvate + L-glutamate. It catalyses the reaction 4-(phosphooxy)-L-threonine + 2-oxoglutarate = (R)-3-hydroxy-2-oxo-4-phosphooxybutanoate + L-glutamate. It functions in the pathway amino-acid biosynthesis; L-serine biosynthesis; L-serine from 3-phospho-D-glycerate: step 2/3. It participates in cofactor biosynthesis; pyridoxine 5'-phosphate biosynthesis; pyridoxine 5'-phosphate from D-erythrose 4-phosphate: step 3/5. Catalyzes the reversible conversion of 3-phosphohydroxypyruvate to phosphoserine and of 3-hydroxy-2-oxo-4-phosphonooxybutanoate to phosphohydroxythreonine. The sequence is that of Phosphoserine aminotransferase from Pseudomonas syringae pv. tomato (strain ATCC BAA-871 / DC3000).